The chain runs to 489 residues: UDP-N-acetylmuramoyl-L-alanyl-D-glutamate--2,6-diaminopimelate ligase (489 aa).

Residue Ser30 participates in UDP-N-acetyl-alpha-D-muramoyl-L-alanyl-D-glutamate binding. Residue 108–114 coordinates ATP; sequence GTNGKTT. Residues Asn149, 150-151, Ser177, Gln183, and Arg185 contribute to the UDP-N-acetyl-alpha-D-muramoyl-L-alanyl-D-glutamate site; that span reads TT. An N6-carboxylysine modification is found at Lys217. Residues Arg383, 407 to 410, Gly459, and Glu463 contribute to the meso-2,6-diaminopimelate site; that span reads DNPR. The Meso-diaminopimelate recognition motif signature appears at 407–410; the sequence is DNPR.

It belongs to the MurCDEF family. MurE subfamily. It depends on Mg(2+) as a cofactor. In terms of processing, carboxylation is probably crucial for Mg(2+) binding and, consequently, for the gamma-phosphate positioning of ATP.

The protein resides in the cytoplasm. The enzyme catalyses UDP-N-acetyl-alpha-D-muramoyl-L-alanyl-D-glutamate + meso-2,6-diaminopimelate + ATP = UDP-N-acetyl-alpha-D-muramoyl-L-alanyl-gamma-D-glutamyl-meso-2,6-diaminopimelate + ADP + phosphate + H(+). The protein operates within cell wall biogenesis; peptidoglycan biosynthesis. Functionally, catalyzes the addition of meso-diaminopimelic acid to the nucleotide precursor UDP-N-acetylmuramoyl-L-alanyl-D-glutamate (UMAG) in the biosynthesis of bacterial cell-wall peptidoglycan. The protein is UDP-N-acetylmuramoyl-L-alanyl-D-glutamate--2,6-diaminopimelate ligase of Geobacillus thermodenitrificans (strain NG80-2).